The chain runs to 287 residues: Formamidopyrimidine-DNA glycosylase (287 aa).

The active-site Schiff-base intermediate with DNA is Pro2. The Proton donor role is filled by Glu3. Catalysis depends on Lys58, which acts as the Proton donor; for beta-elimination activity. The DNA site is built by His104, Arg123, and Arg166. An FPG-type zinc finger spans residues 251–287 (RVYDREGEPCPTPACKGVIAREVQAGRSTFFCPVCQV). The Proton donor; for delta-elimination activity role is filled by Arg277.

This sequence belongs to the FPG family. In terms of assembly, monomer. Requires Zn(2+) as cofactor.

The enzyme catalyses Hydrolysis of DNA containing ring-opened 7-methylguanine residues, releasing 2,6-diamino-4-hydroxy-5-(N-methyl)formamidopyrimidine.. It catalyses the reaction 2'-deoxyribonucleotide-(2'-deoxyribose 5'-phosphate)-2'-deoxyribonucleotide-DNA = a 3'-end 2'-deoxyribonucleotide-(2,3-dehydro-2,3-deoxyribose 5'-phosphate)-DNA + a 5'-end 5'-phospho-2'-deoxyribonucleoside-DNA + H(+). Its function is as follows. Involved in base excision repair of DNA damaged by oxidation or by mutagenic agents. Acts as a DNA glycosylase that recognizes and removes damaged bases. Has a preference for oxidized purines, such as 7,8-dihydro-8-oxoguanine (8-oxoG). Has AP (apurinic/apyrimidinic) lyase activity and introduces nicks in the DNA strand. Cleaves the DNA backbone by beta-delta elimination to generate a single-strand break at the site of the removed base with both 3'- and 5'-phosphates. The chain is Formamidopyrimidine-DNA glycosylase from Caulobacter vibrioides (strain ATCC 19089 / CIP 103742 / CB 15) (Caulobacter crescentus).